Here is a 177-residue protein sequence, read N- to C-terminus: Large ribosomal subunit protein uL6 (177 aa).

Belongs to the universal ribosomal protein uL6 family. As to quaternary structure, part of the 50S ribosomal subunit.

In terms of biological role, this protein binds to the 23S rRNA, and is important in its secondary structure. It is located near the subunit interface in the base of the L7/L12 stalk, and near the tRNA binding site of the peptidyltransferase center. The sequence is that of Large ribosomal subunit protein uL6 from Sphingopyxis alaskensis (strain DSM 13593 / LMG 18877 / RB2256) (Sphingomonas alaskensis).